Here is a 607-residue protein sequence, read N- to C-terminus: Bifunctional endo-1,4-beta-xylanase A (607 aa).

An N-terminal signal peptide occupies residues 1 to 18; it reads MRTIKFFFAVAIATVAKA. The region spanning 35 to 242 is the GH11 1 domain; the sequence is NGQTQHKGVA…SSGIADVTKL (208 aa). Catalysis depends on Glu141, which acts as the Nucleophile. Glu223 (proton donor) is an active-site residue. The span at 248 to 272 shows a compositional bias: polar residues; sequence QKGSNPAPTSTGTVPSSSAGGSTAN. The disordered stretch occupies residues 248–284; sequence QKGSNPAPTSTGTVPSSSAGGSTANGKKFTVGNGQNQ. Residues 280–487 enclose the GH11 2 domain; sequence NGQNQHKGVN…SSGVADVTLL (208 aa). Glu386 functions as the Nucleophile in the catalytic mechanism. Residue Glu474 is the Proton donor of the active site. A disordered region spans residues 493–514; the sequence is PKGSSPATSAAPRTTTRTTTRT. Over residues 496-514 the composition is skewed to low complexity; it reads SSPATSAAPRTTTRTTTRT. CBM10 domains are found at residues 523-563 and 566-606; these read KCSA…CGCG and QCSS…CGCG.

It belongs to the glycosyl hydrolase 11 (cellulase G) family.

It carries out the reaction Endohydrolysis of (1-&gt;4)-beta-D-xylosidic linkages in xylans.. Its pathway is glycan degradation; xylan degradation. In terms of biological role, hydrolyzes xylans into xylobiose and xylose. The protein is Bifunctional endo-1,4-beta-xylanase A (XYNA) of Neocallimastix patriciarum (Rumen fungus).